Reading from the N-terminus, the 85-residue chain is Neurtoxin 10 (85 aa).

Residues 1–23 (MKFCVAVSLLIIASMAGVISVSG) form the signal peptide. One can recognise an LCN-type CS-alpha/beta domain in the interval 24 to 85 (YDVYPRDYAE…NFLSVIWKHC (62 aa)). Cystine bridges form between Cys38-Cys60, Cys46-Cys65, and Cys50-Cys67.

This sequence belongs to the long (3 C-C) scorpion toxin superfamily. Expressed by the venom gland.

It is found in the secreted. The sequence is that of Neurtoxin 10 from Lychas mucronatus (Chinese swimming scorpion).